The chain runs to 99 residues: Large ribosomal subunit protein bL28 (99 aa).

It belongs to the bacterial ribosomal protein bL28 family.

This Brucella anthropi (strain ATCC 49188 / DSM 6882 / CCUG 24695 / JCM 21032 / LMG 3331 / NBRC 15819 / NCTC 12168 / Alc 37) (Ochrobactrum anthropi) protein is Large ribosomal subunit protein bL28.